A 508-amino-acid chain; its full sequence is Photosystem II CP47 reaction center protein (508 aa).

The next 6 membrane-spanning stretches (helical) occupy residues 21–36 (AVHI…WAGS), 101–115 (IVFS…IWHW), 140–156 (GIHL…FGAF), 203–218 (IAAG…FHLS), 237–252 (VLSS…AFIV), and 457–472 (TFAL…HGAR).

Belongs to the PsbB/PsbC family. PsbB subfamily. PSII is composed of 1 copy each of membrane proteins PsbA, PsbB, PsbC, PsbD, PsbE, PsbF, PsbH, PsbI, PsbJ, PsbK, PsbL, PsbM, PsbT, PsbX, PsbY, PsbZ, Psb30/Ycf12, at least 3 peripheral proteins of the oxygen-evolving complex and a large number of cofactors. It forms dimeric complexes. It depends on Binds multiple chlorophylls. PSII binds additional chlorophylls, carotenoids and specific lipids. as a cofactor.

It is found in the plastid. The protein resides in the chloroplast thylakoid membrane. In terms of biological role, one of the components of the core complex of photosystem II (PSII). It binds chlorophyll and helps catalyze the primary light-induced photochemical processes of PSII. PSII is a light-driven water:plastoquinone oxidoreductase, using light energy to abstract electrons from H(2)O, generating O(2) and a proton gradient subsequently used for ATP formation. This Cryptomeria japonica (Japanese cedar) protein is Photosystem II CP47 reaction center protein.